The following is a 32-amino-acid chain: Dermaseptin-L1 (32 aa).

As to expression, expressed by the skin glands.

The protein localises to the secreted. In terms of biological role, antimicrobial peptide active against the Gram-negative bacterium E.coli (MIC=8 uM) but inactive against the Gram-positive bacterium S.aureus. Also inhibits growth of zoospores of the chytrid fungus B.dendrobatidis at high concentrations (above 25 uM). Shows anticancer activities since it is cytolytic against HepG2 human hepatoma-derived cells (LC(50)=45 uM). Is only weakly hemolytic on human erythrocytes. In Agalychnis lemur (Lemur leaf frog), this protein is Dermaseptin-L1.